We begin with the raw amino-acid sequence, 187 residues long: Adenylate kinase (187 aa).

ATP is bound at residue 10-15 (GSGKGT). The tract at residues 30-59 (STGDLLRSEVVAGTPLGLQAKQVMAQGDLV) is NMP. Residues Thr-31, Arg-36, 57–59 (DLV), 85–88 (GYPR), and Gln-92 each bind AMP. The tract at residues 126-136 (GRAQAEGREDD) is LID. Arg-127 contributes to the ATP binding site. Positions 133 and 144 each coordinate AMP. ATP is bound at residue Gly-172.

It belongs to the adenylate kinase family. In terms of assembly, monomer.

It is found in the cytoplasm. The catalysed reaction is AMP + ATP = 2 ADP. Its pathway is purine metabolism; AMP biosynthesis via salvage pathway; AMP from ADP: step 1/1. Catalyzes the reversible transfer of the terminal phosphate group between ATP and AMP. Plays an important role in cellular energy homeostasis and in adenine nucleotide metabolism. This is Adenylate kinase from Xylella fastidiosa (strain M12).